The chain runs to 697 residues: Tryptophan synthase (697 aa).

The segment at 1–298 (MTEQIKKTFL…AVVEPINEMY (298 aa)) is tryptophan synthase alpha chain. Active-site proton acceptor residues include Glu50 and Asp61. The tryptophan synthase beta chain stretch occupies residues 298–697 (YLPQKYGMFG…GPKIGWDLRF (400 aa)). Lys381 is modified (N6-(pyridoxal phosphate)lysine).

It in the N-terminal section; belongs to the TrpA family. The protein in the C-terminal section; belongs to the TrpB family. Pyridoxal 5'-phosphate serves as cofactor.

It carries out the reaction (1S,2R)-1-C-(indol-3-yl)glycerol 3-phosphate + L-serine = D-glyceraldehyde 3-phosphate + L-tryptophan + H2O. The protein operates within amino-acid biosynthesis; L-tryptophan biosynthesis; L-tryptophan from chorismate: step 5/5. This Schizosaccharomyces pombe (strain 972 / ATCC 24843) (Fission yeast) protein is Tryptophan synthase (trp2).